A 421-amino-acid polypeptide reads, in one-letter code: Forkhead box protein J1 (421 aa).

Disordered regions lie at residues Met1–Ser32 and Ala77–Asp110. Over residues Ala11–Gly21 the composition is skewed to gly residues. Residues Lys90–Ser99 are compositionally biased toward polar residues. A DNA-binding region (fork-head) is located at residues Val120–Phe210.

The protein belongs to the FOXJ1 family. In terms of tissue distribution, predominantly expressed in tissues containing motile cilia.

It localises to the nucleus. In terms of biological role, transcription factor specifically required for the formation of motile cilia. Acts by activating transcription of genes that mediate assembly of motile cilia, such as CFAP157. Binds the DNA consensus sequences 5'-HWDTGTTTGTTTA-3' or 5'-KTTTGTTGTTKTW-3' (where H is not G, W is A or T, D is not C, and K is G or T). Activates the transcription of a variety of ciliary proteins in the developing brain and lung. The polypeptide is Forkhead box protein J1 (Mus musculus (Mouse)).